Reading from the N-terminus, the 98-residue chain is Defensin-A1 (98 aa).

A signal peptide spans 1–19 (MQTLSFLLALLFLVAQTPA). The propeptide occupies 20 to 62 (QPTGEGEKGGTIQEPEATEAQDTAAVLMAAGAADGDDSDTKQL). Disulfide bonds link cysteine 67–cysteine 94, cysteine 69–cysteine 83, and cysteine 73–cysteine 93. The propeptide occupies 97 to 98 (IK).

The protein belongs to the alpha-defensin family. In terms of tissue distribution, highly expressed in intestine, and expressed at lower levels in lung and spleen.

The protein localises to the secreted. Functionally, has antimicrobial activity. The protein is Defensin-A1 of Ornithorhynchus anatinus (Duckbill platypus).